Here is a 434-residue protein sequence, read N- to C-terminus: Enolase (434 aa).

Glutamine 167 is a binding site for (2R)-2-phosphoglycerate. Glutamate 209 functions as the Proton donor in the catalytic mechanism. Mg(2+) contacts are provided by aspartate 246, glutamate 291, and aspartate 318. The (2R)-2-phosphoglycerate site is built by lysine 343, arginine 372, serine 373, and lysine 394. Lysine 343 (proton acceptor) is an active-site residue.

Belongs to the enolase family. As to quaternary structure, component of the RNA degradosome, a multiprotein complex involved in RNA processing and mRNA degradation. Requires Mg(2+) as cofactor.

The protein resides in the cytoplasm. It is found in the secreted. It localises to the cell surface. It carries out the reaction (2R)-2-phosphoglycerate = phosphoenolpyruvate + H2O. It functions in the pathway carbohydrate degradation; glycolysis; pyruvate from D-glyceraldehyde 3-phosphate: step 4/5. Its function is as follows. Catalyzes the reversible conversion of 2-phosphoglycerate (2-PG) into phosphoenolpyruvate (PEP). It is essential for the degradation of carbohydrates via glycolysis. The protein is Enolase of Buchnera aphidicola subsp. Acyrthosiphon pisum (strain 5A).